The sequence spans 185 residues: Probable dehydrin LEA (185 aa).

Composition is skewed to basic and acidic residues over residues 1–10 (MADLRDEKGN) and 44–55 (QHKESTTSDIAE). Residues 1 to 185 (MADLRDEKGN…LPGHHNHNHP (185 aa)) form a disordered region. The span at 67-94 (AAAPAGAGAATAATATGVSAGTGATTTG) shows a compositional bias: low complexity. Over residues 130 to 146 (KEKIKEKFGSGKHKDEQ) the composition is skewed to basic and acidic residues. A compositionally biased stretch (low complexity) spans 147-159 (TPATATTTGPATT). Residues 161–177 (QPHEKKGILEKIKDKLP) are compositionally biased toward basic and acidic residues.

Belongs to the plant dehydrin family.

The sequence is that of Probable dehydrin LEA (LEA) from Arabidopsis thaliana (Mouse-ear cress).